The sequence spans 1390 residues: Contactin (1390 aa).

An N-terminal signal peptide occupies residues 1 to 18 (MLAKIGLLASILVLNLVG). The interval 25 to 67 (SENLPDPDPQSGQQPQNYQPSYNKDYSPRYNPLYTGQQSADPN) is disordered. Over residues 58 to 67 (YTGQQSADPN) the composition is skewed to polar residues. 6 consecutive Ig-like C2-type domains span residues 362 to 463 (PYFV…AHLN), 468 to 561 (MEFN…LRVT), 576 to 656 (PKVF…IYIN), 661 to 745 (PQFT…TSFS), 756 to 843 (PSFK…ARVI), and 848 to 939 (IRFI…TSVS). N-linked (GlcNAc...) asparagine glycosylation is present at Asn369. Disulfide bonds link Cys388–Cys446, Cys489–Cys540, Cys593–Cys640, and Cys682–Cys734. 5 N-linked (GlcNAc...) asparagine glycosylation sites follow: Asn537, Asn604, Asn629, Asn691, and Asn774. Disulfide bonds link Cys779–Cys827 and Cys870–Cys923. Asn912, Asn986, and Asn991 each carry an N-linked (GlcNAc...) asparagine glycan. Fibronectin type-III domains lie at 946–1048 (APGG…TYED), 1053–1151 (APRN…SAED), 1156–1254 (APQK…TYRK), and 1259–1357 (PPSS…MGKT). N-linked (GlcNAc...) asparagine glycans are attached at residues Asn1166, Asn1171, and Asn1307. Ala1362 carries GPI-anchor amidated alanine lipidation. A propeptide spans 1363–1390 (NTRHGHNINTALILSTLLLISTFLYTSQ) (removed in mature form).

This sequence belongs to the immunoglobulin superfamily. Contactin family. Forms a complex with Nrg and Nrx. Forms a complex composed of septa junction proteins Nrx-IV/Nrx, Tsf2/MTf, Cont and Nrg during late embryogenesis. Post-translationally, N-glycosylated. Expressed in ectodermally derived epithelial cells from stage 12. All these tissues, such as epidermis, hindgut, foregut, salivary glands and trachea, which contain pleated septate junctions. Expressed by ectodermally derived epithelial cells and along peripheral nerves. Not present in midline glial cells. Expressed in epithelial cells and glial cells of peripheral nerves.

It localises to the cell membrane. The protein localises to the cell junction. The protein resides in the septate junction. Its function is as follows. Required for organization of septate junctions and paracellular barrier functions. Septate junctions, which are the equivalent of vertebrates tight junctions, are characterized by regular arrays of transverse structures that span the intermembrane space and form a physical barrier to diffusion. The chain is Contactin (Cont) from Drosophila melanogaster (Fruit fly).